Here is a 630-residue protein sequence, read N- to C-terminus: Very-long-chain aldehyde decarbonylase GL1-7 (630 aa).

Helical transmembrane passes span 93-113, 126-146, 185-205, and 325-345; these read LYLD…YAII, GALI…YWFH, FLLF…SVLA, and VWYM…AWIY. The 140-residue stretch at 133–272 folds into the Fatty acid hydroxylase domain; sequence LHMGPVEFLY…MPFYDYIYNT (140 aa).

The protein belongs to the sterol desaturase family. In terms of assembly, homodimer. As to expression, expressed in panicles at low levels.

The protein localises to the endoplasmic reticulum membrane. The catalysed reaction is a long-chain fatty aldehyde + 2 NADPH + O2 + H(+) = a long-chain alkane + formate + 2 NADP(+) + H2O. Aldehyde decarbonylase involved in the conversion of aldehydes to alkanes. Core component of a very-long-chain alkane synthesis complex. This Oryza sativa subsp. japonica (Rice) protein is Very-long-chain aldehyde decarbonylase GL1-7.